The following is a 362-amino-acid chain: Class I histocompatibility antigen, Gogo-OKO alpha chain (362 aa).

The signal sequence occupies residues methionine 1–alanine 24. Residues glycine 25–glycine 114 are alpha-1. The Extracellular segment spans residues glycine 25 to isoleucine 308. Asparagine 110 carries N-linked (GlcNAc...) asparagine glycosylation. Residues glycine 115–threonine 206 are alpha-2. 2 disulfide bridges follow: cysteine 125-cysteine 188 and cysteine 227-cysteine 283. Residues aspartate 207–tryptophan 298 form an alpha-3 region. One can recognise an Ig-like C1-type domain in the interval proline 209–threonine 295. The connecting peptide stretch occupies residues glutamate 299–isoleucine 308. The chain crosses the membrane as a helical span at residues valine 309–tryptophan 332. The Cytoplasmic portion of the chain corresponds to arginine 333–alanine 362. The interval serine 337–alanine 362 is disordered. The span at glycine 342 to alanine 362 shows a compositional bias: low complexity.

This sequence belongs to the MHC class I family. In terms of assembly, heterodimer of an alpha chain and a beta chain (beta-2-microglobulin).

The protein localises to the membrane. Involved in the presentation of foreign antigens to the immune system. This Gorilla gorilla gorilla (Western lowland gorilla) protein is Class I histocompatibility antigen, Gogo-OKO alpha chain.